The following is a 590-amino-acid chain: ATP-dependent lipid A-core flippase (590 aa).

6 helical membrane-spanning segments follow: residues 31-51 (IFIA…VIPK), 74-94 (AILT…GYLL), 132-152 (AVIF…ITLV), 159-179 (VALL…VSVI), 259-279 (VTAF…MIQA), and 286-306 (IGGF…LKHL). The 283-residue stretch at 33 to 315 (IAAILAMAVV…LTDINQPLTR (283 aa)) folds into the ABC transmembrane type-1 domain. The 239-residue stretch at 347-585 (LVFERVGFRY…NGLYAGLHRI (239 aa)) folds into the ABC transporter domain. 381-388 (GPSGSGKT) is a binding site for ATP.

This sequence belongs to the ABC transporter superfamily. Lipid exporter (TC 3.A.1.106) family. In terms of assembly, homodimer.

Its subcellular location is the cell inner membrane. It carries out the reaction ATP + H2O + lipid A-core oligosaccharideSide 1 = ADP + phosphate + lipid A-core oligosaccharideSide 2.. Involved in lipopolysaccharide (LPS) biosynthesis. Translocates lipid A-core from the inner to the outer leaflet of the inner membrane. Transmembrane domains (TMD) form a pore in the inner membrane and the ATP-binding domain (NBD) is responsible for energy generation. In Cupriavidus pinatubonensis (strain JMP 134 / LMG 1197) (Cupriavidus necator (strain JMP 134)), this protein is ATP-dependent lipid A-core flippase.